A 421-amino-acid polypeptide reads, in one-letter code: F-box/kelch-repeat protein At1g26930 (421 aa).

The disordered stretch occupies residues Thr54–Pro73. The region spanning Thr70–Leu117 is the F-box domain. 5 Kelch repeats span residues Leu114–Gly167, Asp169–Glu212, Ile213–Gly260, Lys261–Ala312, and Ala320–Phe366.

This is F-box/kelch-repeat protein At1g26930 from Arabidopsis thaliana (Mouse-ear cress).